Here is a 367-residue protein sequence, read N- to C-terminus: Anhydro-N-acetylmuramic acid kinase (367 aa).

11-18 (GTSLDGVD) is an ATP binding site.

The protein belongs to the anhydro-N-acetylmuramic acid kinase family.

The catalysed reaction is 1,6-anhydro-N-acetyl-beta-muramate + ATP + H2O = N-acetyl-D-muramate 6-phosphate + ADP + H(+). It participates in amino-sugar metabolism; 1,6-anhydro-N-acetylmuramate degradation. Its pathway is cell wall biogenesis; peptidoglycan recycling. Catalyzes the specific phosphorylation of 1,6-anhydro-N-acetylmuramic acid (anhMurNAc) with the simultaneous cleavage of the 1,6-anhydro ring, generating MurNAc-6-P. Is required for the utilization of anhMurNAc either imported from the medium or derived from its own cell wall murein, and thus plays a role in cell wall recycling. This Rhodopseudomonas palustris (strain ATCC BAA-98 / CGA009) protein is Anhydro-N-acetylmuramic acid kinase.